Here is a 201-residue protein sequence, read N- to C-terminus: 3-isopropylmalate dehydratase small subunit (201 aa).

Belongs to the LeuD family. LeuD type 1 subfamily. Heterodimer of LeuC and LeuD.

It carries out the reaction (2R,3S)-3-isopropylmalate = (2S)-2-isopropylmalate. It functions in the pathway amino-acid biosynthesis; L-leucine biosynthesis; L-leucine from 3-methyl-2-oxobutanoate: step 2/4. In terms of biological role, catalyzes the isomerization between 2-isopropylmalate and 3-isopropylmalate, via the formation of 2-isopropylmaleate. This is 3-isopropylmalate dehydratase small subunit from Azorhizobium caulinodans (strain ATCC 43989 / DSM 5975 / JCM 20966 / LMG 6465 / NBRC 14845 / NCIMB 13405 / ORS 571).